Consider the following 250-residue polypeptide: Small ribosomal subunit protein uS2 (250 aa).

Residues Asp-226–Ala-250 form a disordered region. A compositionally biased stretch (low complexity) spans Ala-239–Ala-250.

It belongs to the universal ribosomal protein uS2 family.

This chain is Small ribosomal subunit protein uS2 (rpsB), found in Zymomonas mobilis subsp. mobilis (strain ATCC 31821 / ZM4 / CP4).